The following is a 279-amino-acid chain: MTKIKIVTDSSVTIEPELVKQLDITIVPLSVMIDNVVYSDADLKEEGKFLQLMQESKNLPKTSQPPVGVFAEIFEDLCKDGGQILAIHMSHALSGTVEAARQGASLSTADVTVVDSSFTDQALKFQVVEAAKLAQEGKDMEAILSHVEEVKNHTELYIGVSTLENLVKGGRISRVTGLLSSLLNIRAVMQMKDHELQPMVKGRGTKTFKKWLDELITSLSERAVAEIGISYSGSDDWAKEMKESLQAYVEKPISVLETGSIIQTHTGENAWAILIRYHS.

The DegV domain occupies 4–277 (IKIVTDSSVT…ENAWAILIRY (274 aa)). 2 residues coordinate hexadecanoate: threonine 62 and serine 94.

Its function is as follows. May bind long-chain fatty acids, such as palmitate, and may play a role in lipid transport or fatty acid metabolism. This chain is DegV domain-containing protein SP_1112, found in Streptococcus pneumoniae serotype 4 (strain ATCC BAA-334 / TIGR4).